Consider the following 141-residue polypeptide: AsCystatin (141 aa).

The first 26 residues, 1–26 (MVHSQLPVAAPLRLLCALLLLPLATM), serve as a signal peptide directing secretion. One can recognise a Cystatin domain in the interval 29–129 (GGLSPRSVTD…CRFQVWSCPW (101 aa)). Positions 73 to 77 (QVVTG) match the Secondary area of contact motif. 2 cysteine pairs are disulfide-bonded: Cys91/Cys107 and Cys120/Cys140.

It belongs to the cystatin family. In terms of tissue distribution, expressed at a low level by the venom gland (at protein level).

Its subcellular location is the secreted. Recombinant AsCystatin inhibits various C1 cysteine proteases including cathepsin L (Ki is 0.89 pM), papain (Ki is 1.74 pM) and cathepsin B (Ki is 0.69 nM). This activity has also been observed in the crude venom. This protein has no toxic activity and its function in the venom is unknown. It may play a role as a housekeeping or regulatory protein. The sequence is that of AsCystatin from Austrelaps superbus (Lowland copperhead snake).